The following is a 184-amino-acid chain: Photosystem I assembly protein Ycf4 (184 aa).

The next 2 membrane-spanning stretches (helical) occupy residues 22-42 and 57-77; these read FCWA…GTSS and IIFF…LFIS.

The protein belongs to the Ycf4 family.

The protein localises to the plastid. Its subcellular location is the chloroplast thylakoid membrane. Functionally, seems to be required for the assembly of the photosystem I complex. This chain is Photosystem I assembly protein Ycf4, found in Crucihimalaya wallichii (Rock-cress).